The primary structure comprises 393 residues: G protein-activated inward rectifier potassium channel 3 (393 aa).

Residues 1–23 are disordered; the sequence is MAQENAAFSPGQEEPPRRRGRQR. At 1–57 the chain is on the cytoplasmic side; the sequence is MAQENAAFSPGQEEPPRRRGRQRYVEKDGRCNVQQGNVRETYRYLTDLFTTLVDLQW. A helical transmembrane segment spans residues 58–82; that stretch reads RLSLLFFVLAYALTWLFFGAIWWLI. Topologically, residues 83–106 are extracellular; sequence AYGRGDLEHLEDTAWTPCVNNLNG. Residues 107–118 constitute an intramembrane region (helical; Pore-forming); that stretch reads FVAAFLFSIETE. An intramembrane region (pore-forming) is located at residues 119–125; that stretch reads TTIGYGH. A Selectivity filter motif is present at residues 120–125; sequence TIGYGH. At 126-134 the chain is on the extracellular side; it reads RVITDQCPE. The chain crosses the membrane as a helical span at residues 135–156; it reads GIVLLLLQAILGSMVNAFMVGC. The Cytoplasmic segment spans residues 157 to 393; the sequence is MFVKISQPNK…LPPPESESKV (237 aa). The interval 360 to 393 is disordered; sequence KVEEEGAGEGAGGEAGADKEQNGCLPPPESESKV. Residues 384 to 393 show a composition bias toward pro residues; the sequence is LPPPESESKV. The short motif at 390–393 is the PDZ-binding element; it reads ESKV.

Belongs to the inward rectifier-type potassium channel (TC 1.A.2.1) family. KCNJ9 subfamily. In terms of assembly, associates with KCNJ3/GIRK1 to form a G-protein-activated heteromultimer pore-forming unit. Interacts (via PDZ-binding motif) with SNX27 (via PDZ domain); the interaction is required when endocytosed to prevent degradation in lysosomes and promote recycling to the plasma membrane.

It is found in the membrane. The enzyme catalyses K(+)(in) = K(+)(out). Its function is as follows. Inward rectifier potassium channels are characterized by a greater tendency to allow potassium to flow into the cell rather than out of it. Their voltage dependence is regulated by the concentration of extracellular potassium; as external potassium is raised, the voltage range of the channel opening shifts to more positive voltages. The inward rectification is mainly due to the blockage of outward current by internal magnesium, This receptor is controlled by G proteins. Unable to produce channel activity when expressed alone. Forms a functional channel in association with KCNJ3/GIRK1. The chain is G protein-activated inward rectifier potassium channel 3 (KCNJ9) from Homo sapiens (Human).